We begin with the raw amino-acid sequence, 588 residues long: MNKLDVNQWFPIATTEDLPKRHVFHATLLGQEMAIWRDDSGSVNAWENRCPHRGLRLTLGANTGNELRCQYHGWTYESGTGGCTFVPAHRDAPPPNAARVNTFPVREKHGFIWTTLGQPPGEPISILDDAQLVNAVKTNLHSVVIDADIDGVVSVLRQNLSAFIDVFGAASAEDLHLKSMLQDRGILVTRSGSIAIHFYMQRSTISKCVVHAQVLTPGRPGYELQKNYSYAMNVIRRAAEAVATDLISITDISDQTIEKLEVVRENMTKAPPTHYICEVVTRTQETGDINSYWLKPIGYPLPAFSPGMHISITTPEGSIRQYSLVNGPDERESFIIGVKKEIQSRGGSRSMHEDVKVGTQLKVTLPRNGFPLVQTRKHPILVAGGIGITPILCMAQALDQQGSSYEIHYFARAFEHVPFQDRLTALGDRLNVHLGLGPDETRAKLPDIMEIHNAQDVDVYTCGPQPMIETVSAVALAHGIAEESIRFEFFSKKNDVPVSDEEYEVELKKTGQIFTVSPGSTLLQACLDNDVRIEASCEQGVCGTCITPVVSGDLEHHDTYLSKKERESGKWIMPCVSRCKSKKIVLDL.

The Rieske domain maps to 9 to 114 (WFPIATTEDL…VREKHGFIWT (106 aa)). [2Fe-2S] cluster-binding residues include cysteine 50, histidine 52, cysteine 69, and histidine 72. The region spanning 272-373 (PTHYICEVVT…TLPRNGFPLV (102 aa)) is the FAD-binding FR-type domain. One can recognise a 2Fe-2S ferredoxin-type domain in the interval 503–588 (YEVELKKTGQ…CKSKKIVLDL (86 aa)). [2Fe-2S] cluster contacts are provided by cysteine 537, cysteine 542, cysteine 545, and cysteine 575.

The cofactor is [2Fe-2S] cluster.

Its function is as follows. Involved in the caffeine degradation, which is the essential first step for assimilating the carbon and nitrogen in caffeine. Catalyzes the oxidation of NADH and transfers electrons to NdmA and NdmB, which catalyze the N-demethylation reactions. The protein is Oxidoreductase NdmD (ndmD) of Pseudomonas putida (Arthrobacter siderocapsulatus).